Consider the following 162-residue polypeptide: Selenoprotein F (162 aa).

Residues 1–28 (MAAEPGGWLGPALGLRLLLATALQMVSA) form the signal peptide. Sec-93 is a non-standard amino acid (selenocysteine).

The protein belongs to the selenoprotein M/F family. As to quaternary structure, forms a tight complex with UGGT1/UGCGL1. Interacts with UGGT2/UGCGL2. Interacts with RDH11.

It is found in the endoplasmic reticulum lumen. In terms of biological role, may be involved in redox reactions associated with the formation of disulfide bonds. May contribute to the quality control of protein folding in the endoplasmic reticulum. May regulate protein folding by enhancing the catalytic activity of UGGT1/UGCGL1 and UGGT2/UGCGL2. The sequence is that of Selenoprotein F from Sus scrofa (Pig).